Consider the following 767-residue polypeptide: Polyribonucleotide nucleotidyltransferase (767 aa).

Mg(2+) is bound by residues aspartate 509 and aspartate 515. One can recognise a KH domain in the interval proline 575–isoleucine 634. Positions glycine 646–valine 718 constitute an S1 motif domain. Positions alanine 725 to threonine 767 are disordered. The span at glutamine 750–serine 759 shows a compositional bias: basic residues.

This sequence belongs to the polyribonucleotide nucleotidyltransferase family. It depends on Mg(2+) as a cofactor.

It localises to the cytoplasm. The enzyme catalyses RNA(n+1) + phosphate = RNA(n) + a ribonucleoside 5'-diphosphate. Its function is as follows. Involved in mRNA degradation. Catalyzes the phosphorolysis of single-stranded polyribonucleotides processively in the 3'- to 5'-direction. In Thermobifida fusca (strain YX), this protein is Polyribonucleotide nucleotidyltransferase.